A 202-amino-acid chain; its full sequence is Ion-translocating oxidoreductase complex subunit G (202 aa).

The helical transmembrane segment at 11–31 threads the bilayer; the sequence is ACLMGFFSFFSLSSVIFVKNI. The residue at position 176 (T176) is an FMN phosphoryl threonine.

It belongs to the RnfG family. As to quaternary structure, the complex is composed of six subunits: RnfA, RnfB, RnfC, RnfD, RnfE and RnfG. It depends on FMN as a cofactor.

It is found in the cell inner membrane. Functionally, part of a membrane-bound complex that couples electron transfer with translocation of ions across the membrane. The polypeptide is Ion-translocating oxidoreductase complex subunit G (Buchnera aphidicola subsp. Schizaphis graminum (strain Sg)).